The sequence spans 170 residues: MSDEILNGAAAPADAAAGPAFTIEKIYVKDVSFESPNAPAVFNDANQPELQLNLNQKVQRLNDNAFEVVLAVTLTCTAGGKTAYVAEVQQAGVFGLVGLEPQAIDVLLGTQCPNILFPYVRTLVSDLIQAGGFPPFYLQPINFEALYAETLRQRSQGETSLADSEPAGNA.

Belongs to the SecB family. Homotetramer, a dimer of dimers. One homotetramer interacts with 1 SecA dimer.

It is found in the cytoplasm. Functionally, one of the proteins required for the normal export of preproteins out of the cell cytoplasm. It is a molecular chaperone that binds to a subset of precursor proteins, maintaining them in a translocation-competent state. It also specifically binds to its receptor SecA. The sequence is that of Protein-export protein SecB from Xanthomonas campestris pv. campestris (strain 8004).